Reading from the N-terminus, the 58-residue chain is Large ribosomal subunit protein uL30 (58 aa).

The protein belongs to the universal ribosomal protein uL30 family. In terms of assembly, part of the 50S ribosomal subunit.

The polypeptide is Large ribosomal subunit protein uL30 (Acinetobacter baylyi (strain ATCC 33305 / BD413 / ADP1)).